The sequence spans 130 residues: Small ribosomal subunit protein uS9 (130 aa).

The interval 98 to 130 (LKRAGLLTRDPRMKERKKPGLKKARRSPQFSKR) is disordered. The segment covering 111-130 (KERKKPGLKKARRSPQFSKR) has biased composition (basic residues).

This sequence belongs to the universal ribosomal protein uS9 family.

In Staphylococcus epidermidis (strain ATCC 35984 / DSM 28319 / BCRC 17069 / CCUG 31568 / BM 3577 / RP62A), this protein is Small ribosomal subunit protein uS9.